The chain runs to 466 residues: Ribulose bisphosphate carboxylase large chain (466 aa).

Lys-5 carries the N6,N6,N6-trimethyllysine modification. 2 residues coordinate substrate: Asn-114 and Thr-164. Residue Lys-166 is the Proton acceptor of the active site. Residue Lys-168 participates in substrate binding. Mg(2+) is bound by residues Lys-192, Asp-194, and Glu-195. An N6-carboxylysine modification is found at Lys-192. His-285 functions as the Proton acceptor in the catalytic mechanism. Substrate-binding residues include Arg-286, His-318, and Ser-370.

The protein belongs to the RuBisCO large chain family. Type I subfamily. In terms of assembly, heterohexadecamer of 8 large chains and 8 small chains; disulfide-linked. The disulfide link is formed within the large subunit homodimers. Mg(2+) is required as a cofactor. Post-translationally, the disulfide bond which can form in the large chain dimeric partners within the hexadecamer appears to be associated with oxidative stress and protein turnover.

It is found in the plastid. It localises to the chloroplast. The enzyme catalyses 2 (2R)-3-phosphoglycerate + 2 H(+) = D-ribulose 1,5-bisphosphate + CO2 + H2O. It carries out the reaction D-ribulose 1,5-bisphosphate + O2 = 2-phosphoglycolate + (2R)-3-phosphoglycerate + 2 H(+). Functionally, ruBisCO catalyzes two reactions: the carboxylation of D-ribulose 1,5-bisphosphate, the primary event in carbon dioxide fixation, as well as the oxidative fragmentation of the pentose substrate in the photorespiration process. Both reactions occur simultaneously and in competition at the same active site. This chain is Ribulose bisphosphate carboxylase large chain, found in Saururus cernuus (Lizard's tail).